A 309-amino-acid polypeptide reads, in one-letter code: Oxygen-dependent coproporphyrinogen-III oxidase (309 aa).

Residue Ser-94 coordinates substrate. Residues His-98 and His-108 each coordinate a divalent metal cation. His-108 (proton donor) is an active-site residue. 110–112 (NVR) serves as a coordination point for substrate. A divalent metal cation contacts are provided by His-147 and His-177. The interval 242 to 277 (YVEFNLVWDRGTLFGLQTGGRTESILMSLPPLVRWE) is important for dimerization. 260 to 262 (GGR) serves as a coordination point for substrate.

The protein belongs to the aerobic coproporphyrinogen-III oxidase family. As to quaternary structure, homodimer. A divalent metal cation is required as a cofactor.

It is found in the cytoplasm. It catalyses the reaction coproporphyrinogen III + O2 + 2 H(+) = protoporphyrinogen IX + 2 CO2 + 2 H2O. It participates in porphyrin-containing compound metabolism; protoporphyrin-IX biosynthesis; protoporphyrinogen-IX from coproporphyrinogen-III (O2 route): step 1/1. Involved in the heme biosynthesis. Catalyzes the aerobic oxidative decarboxylation of propionate groups of rings A and B of coproporphyrinogen-III to yield the vinyl groups in protoporphyrinogen-IX. The polypeptide is Oxygen-dependent coproporphyrinogen-III oxidase (Yersinia pestis bv. Antiqua (strain Antiqua)).